The sequence spans 2074 residues: MWISSRFFVILLLLNLDNTCSEPFEAHLRGPGFVMEPPGRVEFSNSSGGWLDCSASGSPQPTVDWVHADGSAVTEIHGVRRVLRNGTLVLMPFAAAAYHQDVHNTIYRCIASNSVGRIVSRDVQVRAVVAQAYKVDVEVLSAARGCTAILRCVVPTFVKELVRVVSWVHEPAIYIYPSLQGDGKFHLLPTGELLIHNLQESDESQSFRCRSMHRLTRQVVVSSPTRLRINSHRGIISPSVVEHTAHVQVSQDEGAVLLCVAQGCPSPEYSWFTHNGAGPLPVLSGPRVRLLGPILAIEAVTGEDSGVYKCTAGNVGGEASAELRLTVATPIQVEISPNVLSVHMGGTAEFRCLVTSNGSPVGMQNILWYKDGRQLPSSGRVEDTLVVPRVSRENRGMYQCVVRRPEGDTFQATAELQLGDAPPVLLYSFIEQTLQPGPAVSLKCSAAGNPTPQISWTLDGFPLPSNGRFMIGQYITVHGDVISHVNISHVMVEDGGEYACIAENRAGRVQHAARLNIYGLPYIRLIPKVTAVSGETLNLKCPVAGYPIEEIHWERGGRELPDDIRQRVQPDGSLTISPVQKNSDSGVYTCWARNKQGHSARRSGEVTVIVPPSIEPFAFQEGLAEGMRTRTVCGVSRGDPPLKLIWLKDGDPLPDLLGANVTMLDQYSSLLSIPSLSATHSGEYTCVAKNPAAEIKYTALLQVKVPPRWIVEPVDANVERNRHIMLHCQAQGVPTPSIVWKKATGSKSGEYEEVRERPFTKLLGNGSLLLQHVKEDREGFYLCQANNGIGTGIGKVIQLKVNSSPYFSSTSRSVMVKKGDTALLQCAVSGDKPINIVWMRSGKNTLNPSTNYKISVKQEATPDGVSAELQIRTVDATDSGPYFCRASNLYGNDQQLVQLQVQEPPLPPSVLEAAMISSRSVNIKWQPKTLGTGDVTKYIVEFREADPLFVDQWQQIEVKDPPHFNAMIENLKPATRYAFRVIAEGSAGRSAPSQELIVRTEPQRPAGPPLSLSARPLSSTELLISWVAPLPELRHGDIQGYNVGYKLSSSGNTAYNFTSVSGDGDGGNGELLLSGLAKFARYTVVVQAFNQVGPGPLSEPTAAQTMEDVPSRPPEDVRCAALSSQSLQVSWQPPPIYHTNGLLQGYKLIFEPIIDDIQPSKDEVESRKTTALTMVLTGLRKYTNYSIQVLAHTRMGDGVVSKPLFCHSEEDVPEAPADIKVVSSSSQSLYISWLPPNEPNGVITKYSLYTRVVNGREELNNEKRSLPSQQAYYEAKGLHPHMEYQFWVTASTRVGEGKSSRVSSQITTNRIPARIISFGGPVVRPWRSTVTLPCTAVGKPKREWFKSDVALRQGGLHNSQLLDSGDLIISSLQLADGGNYSCQVDNGIGTDRLTHTLIVQVPPTAPVLYVTSATSSSILMHWKCGFTGNAPITGYTLFYRRANGNTDEMQLSRHASSHELKGLMCGSTYQIHLSAQNKVGTSPTSTILHVRTQGQSPGHPASTALLAPNSTSLLVRLHSWPDNGCPLLYFVLQYRAVTDDPDAEWVLVSNALKPQRRIVINNLQPSTLYQLRMEAHNVAGISQAEFNFVTLTKDGDPPPPEIMHRGRSGQTTVIFANINLLIPTIAAVSGMFCTIIMIIVCYRHMLKNAPPLAEQSQIQKESLENRANSEAAQRERYYATIHKVSMQNNDKIPETSEDISPYATFQLSEAGGNMSQPHHGGPANTLLHSFMYHERALAEGCSSPPPAAVLNPPTTTTHHHHHHQRPLKTIHNYYQTSPFHNISKNRRRHSRKTEPESEESESDQDQLTSSRTESSNQHEGKIKHSIIYHGAQSSTSSDLSPMSEQKSLPRRGRSRYHHQQYQFSTNTTPRHHNSNKMNNNTTSNTNTTATNTTATPSTSSNSNKILSPRGGNLKSISSTFKSQDSIQCHIPTLVKSPSISTQQQKQFHKQQLQNSSTNNSQHSSSNPNSSSLKQQQPLLITPKLHQLEANGQELLGLDGIGNSPLVACMPPSSQFRPIPHKSIMPAHEPPHHHNHSQQSHPHQQQQQQQHPGTLLNPSTAMLSSKFFTAPTLPK.

A signal peptide spans 1-21 (MWISSRFFVILLLLNLDNTCS). Residues 22–1619 (EPFEAHLRGP…QTTVIFANIN (1598 aa)) are Extracellular-facing. 8 consecutive Ig-like C2-type domains span residues 31–120 (PGFV…RIVS), 238–326 (PSVV…LRLT), 330–417 (PIQV…AELQ), 422–516 (PPVL…ARLN), 521–607 (PYIR…GEVT), 612–698 (PSIE…IKYT), 707–802 (PRWI…LKVN), and 805–902 (PYFS…LQVQ). Cystine bridges form between Cys53–Cys109, Cys259–Cys310, Cys352–Cys400, Cys444–Cys500, Cys541–Cys590, Cys633–Cys686, Cys728–Cys783, and Cys826–Cys884. Fibronectin type-III domains lie at 907-1003 (PPSV…TEPQ), 1008-1108 (PPLS…TMED), 1113-1211 (PPED…SEED), and 1215-1311 (APAD…TNRI). Residues 1312–1400 (PARIISFGGP…DRLTHTLIVQ (89 aa)) enclose the Ig-like C2-type 9 domain. A disulfide bridge connects residues Cys1334 and Cys1382. 2 Fibronectin type-III domains span residues 1402-1495 (PPTA…TQGQ) and 1496-1595 (SPGH…TKDG). Residues 1620–1640 (LLIPTIAAVSGMFCTIIMIIV) traverse the membrane as a helical segment. At 1641–2074 (CYRHMLKNAP…KFFTAPTLPK (434 aa)) the chain is on the cytoplasmic side. Disordered regions lie at residues 1739–1766 (EGCS…HQRP), 1778–1917 (PFHN…KSIS), 1936–1974 (SPSI…SLKQ), and 2011–2074 (PSSQ…TLPK). Over residues 1757-1766 (THHHHHHQRP) the composition is skewed to basic residues. Over residues 1831-1846 (AQSSTSSDLSPMSEQK) the composition is skewed to polar residues. Over residues 1848 to 1858 (LPRRGRSRYHH) the composition is skewed to basic residues. A compositionally biased stretch (polar residues) spans 1859–1868 (QQYQFSTNTT). Low complexity-rich tracts occupy residues 1875-1903 (NKMN…SNSN), 1942-1974 (QQQK…SLKQ), and 2036-2051 (SQQS…QQHP). A compositionally biased stretch (polar residues) spans 2055 to 2066 (LNPSTAMLSSKF).

The protein resides in the membrane. Its function is as follows. Cell adhesion molecule. This chain is Cell adhesion molecule Dscam2 (Dscam2), found in Drosophila melanogaster (Fruit fly).